Reading from the N-terminus, the 233-residue chain is uncharacterized protein (233 aa).

Residues 1–10 are compositionally biased toward basic residues; the sequence is MSSKLSKKKL. The interval 1-90 is disordered; sequence MSSKLSKKKL…KRQKGKNNDR (90 aa). Residues 11 to 56 show a composition bias toward basic and acidic residues; the sequence is KSLEYRSKKFDKKSQSLEEHEKKVQQKNEELEKKAADKISRDELPE. The span at 76–85 shows a compositional bias: basic residues; sequence KTLKSKRQKG. The 80-residue stretch at 92 to 171 folds into the RRM domain; sequence VILFVGNLPK…RKINIELTAG (80 aa). Composition is skewed to basic and acidic residues over residues 194-216 and 224-233; these read MRQRVASEEQQAGEEKMARKAVA and IHPDRLRLLQ. Positions 194 to 233 are disordered; that stretch reads MRQRVASEEQQAGEEKMARKAVADEGLESGIHPDRLRLLQ.

It is found in the nucleus. It localises to the nucleolus. This is an uncharacterized protein from Schizosaccharomyces pombe (strain 972 / ATCC 24843) (Fission yeast).